A 648-amino-acid chain; its full sequence is Zinc finger protein grt1 (648 aa).

Positions 13-42 (ACENCRKRKVKCSGGDVCFECQKYNENCVY) form a DNA-binding region, zn(2)-C6 fungal-type.

As to quaternary structure, monomer.

Its subcellular location is the nucleus. Its function is as follows. May be involved in the facilitation of anaphase progression in mitosis. The sequence is that of Zinc finger protein grt1 (grt1) from Schizosaccharomyces pombe (strain 972 / ATCC 24843) (Fission yeast).